The primary structure comprises 88 residues: UPF0250 protein IL0958 (88 aa).

The protein belongs to the UPF0250 family.

The polypeptide is UPF0250 protein IL0958 (Idiomarina loihiensis (strain ATCC BAA-735 / DSM 15497 / L2-TR)).